The primary structure comprises 385 residues: DNA replication and repair protein RecF (385 aa).

30 to 37 (GPNGYGKT) serves as a coordination point for ATP.

Belongs to the RecF family.

It is found in the cytoplasm. Its function is as follows. The RecF protein is involved in DNA metabolism; it is required for DNA replication and normal SOS inducibility. RecF binds preferentially to single-stranded, linear DNA. It also seems to bind ATP. In Mycobacterium bovis (strain ATCC BAA-935 / AF2122/97), this protein is DNA replication and repair protein RecF.